Consider the following 415-residue polypeptide: Very late expression factor 1 (415 aa).

Residues 171 to 357 form the Tyr recombinase domain; it reads REIINTILDC…DESDDNDEDD (187 aa). Active-site residues include arginine 214, lysine 242, arginine 307, and histidine 330. Residues 339–415 form a disordered region; it reads YLNKYDVGVD…GDDADLLSFN (77 aa). Tyrosine 343 (O-(3'-phospho-DNA)-tyrosine intermediate) is an active-site residue. The segment covering 346–363 has biased composition (acidic residues); the sequence is GVDESDDNDEDDDDDEND. The segment covering 375-404 has biased composition (low complexity); the sequence is NISNYDINNSSSGNSSSNNTSGNDFNNNIS.

It belongs to the 'phage' integrase family.

Involved in very late gene activation. The protein is Very late expression factor 1 (VLF-1) of Heliothis zea nuclear polyhedrosis virus (HzSNPV).